Reading from the N-terminus, the 595-residue chain is Isoprene synthase, chloroplastic (595 aa).

The N-terminal 37 residues, 1–37 (MATELLCLHRPISLTHKLFRNPLPKVIQATPLTLKLR), are a transit peptide targeting the chloroplast. Residue D345 coordinates dimethylallyl diphosphate. Mg(2+) is bound by residues D345 and D349. A DDXXD motif motif is present at residues 345–349 (DDIYD). Residues E423, R486, and N489 each coordinate dimethylallyl diphosphate. The Mg(2+) site is built by N489, S493, and E497.

It belongs to the terpene synthase family. Tpsb subfamily. The cofactor is Mg(2+). Mn(2+) is required as a cofactor.

The protein localises to the plastid. Its subcellular location is the chloroplast. The catalysed reaction is dimethylallyl diphosphate = isoprene + diphosphate. Lyase that catalyzes the formation of isoprene from dimethylallyl diphosphate. This chain is Isoprene synthase, chloroplastic (ISPS), found in Populus tremuloides (Quaking aspen).